A 314-amino-acid polypeptide reads, in one-letter code: Olfactory receptor 2W3 (314 aa).

At 1–25 (MDGTNGSTQTHFILLGFSDRPHLER) the chain is on the extracellular side. N-linked (GlcNAc...) asparagine glycosylation is present at Asn5. Residues 26 to 49 (ILFVVILIAYLLTLVGNTTIILVS) form a helical membrane-spanning segment. Topologically, residues 50-57 (RLDPHLHT) are cytoplasmic. A helical membrane pass occupies residues 58-79 (PMYFFLAHLSFLDLSFTTSSIP). Residues 80–100 (QLLYNLNGCDKTISYMGCAIQ) lie on the Extracellular side of the membrane. Residues 101–120 (LFLFLGLGGVECLLLAVMAY) form a helical membrane-spanning segment. Over 121–139 (DRCVAICKPLHYMVIMNPR) the chain is Cytoplasmic. The chain crosses the membrane as a helical span at residues 140-158 (LCRGLVSVTWGCGVANSLA). At 159-195 (MSPVTLRLPRCGHHEVDHFLREMPALIRMACVSTVAI) the chain is on the extracellular side. Residues 196 to 219 (EGTVFVLAVGVVLSPLVFILLSYS) traverse the membrane as a helical segment. Residues 220–236 (YIVRAVLQIRSASGRQK) lie on the Cytoplasmic side of the membrane. The helical transmembrane segment at 237-259 (AFGTCGSHLTVVSLFYGNIIYMY) threads the bilayer. At 260 to 272 (MQPGASSSQDQGM) the chain is on the extracellular side. The helical transmembrane segment at 273–292 (FLMLFYNIVTPLLNPLIYTL) threads the bilayer. Over 293–314 (RNREVKGALGRLLLGKRELGKE) the chain is Cytoplasmic.

This sequence belongs to the G-protein coupled receptor 1 family.

It is found in the cell membrane. Its function is as follows. Odorant receptor. The chain is Olfactory receptor 2W3 (OR2W3) from Homo sapiens (Human).